Reading from the N-terminus, the 88-residue chain is UPF0250 protein PM1928 (88 aa).

The protein belongs to the UPF0250 family.

This is UPF0250 protein PM1928 from Pasteurella multocida (strain Pm70).